The following is a 267-amino-acid chain: Expansin-B10 (267 aa).

A signal peptide spans 1–22 (MASSCLLLACVVAAAMVSAVSC). Asparagine 32 carries an N-linked (GlcNAc...) asparagine glycan. The Expansin-like EG45 domain occupies 61-167 (GGACGYKDID…RRVRCKYPGE (107 aa)). Disulfide bonds link cysteine 64/cysteine 92, cysteine 95/cysteine 162, and cysteine 100/cysteine 106. The 82-residue stretch at 181-262 (NYFAVLVKYV…NWKANALYKS (82 aa)) folds into the Expansin-like CBD domain. N-linked (GlcNAc...) asparagine glycosylation is present at asparagine 213.

The protein belongs to the expansin family. Expansin B subfamily.

It is found in the secreted. The protein localises to the cell wall. The protein resides in the membrane. In terms of biological role, may cause loosening and extension of plant cell walls by disrupting non-covalent bonding between cellulose microfibrils and matrix glucans. No enzymatic activity has been found. May be required for rapid internodal elongation in deepwater rice during submergence. The polypeptide is Expansin-B10 (EXPB10) (Oryza sativa subsp. japonica (Rice)).